Reading from the N-terminus, the 284-residue chain is Tropomyosin (284 aa).

Residues 1-284 (MEAIKNKMQA…DQTFAELTGY (284 aa)) adopt a coiled-coil conformation. The interval 22 to 43 (AEIAEQKSRDANLRAEKSEEEV) is disordered.

It belongs to the tropomyosin family. Homodimer.

Tropomyosin, in association with the troponin complex, plays a central role in the calcium dependent regulation of muscle contraction. This is Tropomyosin from Lepidoglyphus destructor (Storage mite).